We begin with the raw amino-acid sequence, 928 residues long: DNA-binding protein RFX6 (928 aa).

Disordered regions lie at residues 1–22 (MAKVPVLEDAFLPAQPSPQVSP) and 53–102 (PGGA…AADL). Basic and acidic residues predominate over residues 92 to 101 (SHDSKTKAAD). The segment at residues 124 to 199 (TLQWLEENYI…YHYYGIGIKE (76 aa)) is a DNA-binding region (RFX-type winged-helix).

This sequence belongs to the RFX family. As to quaternary structure, interacts with RFX3.

It is found in the nucleus. Transcription factor required to direct islet cell differentiation during endocrine pancreas development. Specifically required for the differentiation of 4 of the 5 islet cell types and for the production of insulin. Not required for pancreatic PP (polypeptide-producing) cells differentiation. Acts downstream of NEUROG3 and regulates the transcription factors involved in beta-cell maturation and function, thereby restricting the expression of the beta-cell differentiation and specification genes, and thus the beta-cell fate choice. Activates transcription by forming a heterodimer with RFX3 and binding to the X-box in the promoter of target genes. Involved in glucose-stimulated insulin secretion by promoting insulin and L-type calcium channel gene transcription. The polypeptide is DNA-binding protein RFX6 (RFX6) (Ailuropoda melanoleuca (Giant panda)).